Consider the following 202-residue polypeptide: Nascent polypeptide-associated complex subunit alpha (202 aa).

Residues 1–19 (MADPRVEELPDEEVPKTNV) are compositionally biased toward basic and acidic residues. Residues 1 to 44 (MADPRVEELPDEEVPKTNVEDAGSDSESEAGEEPTIPGGAAVAV) are disordered. Residues 22–32 (AGSDSESEAGE) show a composition bias toward acidic residues. The NAC-A/B domain occupies 46–111 (SRNEKKARKA…AKIEDLNAQA (66 aa)). Residues 118-165 (QLAAQEAAQEHAGHEHEDILGKAKEPEAEKKEAEEDDGEEVDESGLEA) form a disordered region. Over residues 125-150 (AQEHAGHEHEDILGKAKEPEAEKKEA) the composition is skewed to basic and acidic residues. Positions 151-162 (EEDDGEEVDESG) are enriched in acidic residues. The UBA domain maps to 163–202 (LEAKDIELVMAQANVSRKKAVKALRENDNDIVNSIMALSI).

Belongs to the NAC-alpha family. As to quaternary structure, part of the nascent polypeptide-associated complex (NAC), consisting of egd2 and egd1. NAC associates with ribosomes via egd1.

It localises to the cytoplasm. The protein localises to the nucleus. Component of the nascent polypeptide-associated complex (NAC), a dynamic component of the ribosomal exit tunnel, protecting the emerging polypeptides from interaction with other cytoplasmic proteins to ensure appropriate nascent protein targeting. The NAC complex also promotes mitochondrial protein import by enhancing productive ribosome interactions with the outer mitochondrial membrane and blocks the inappropriate interaction of ribosomes translating non-secretory nascent polypeptides with translocation sites in the membrane of the endoplasmic reticulum. Egd2 may also be involved in transcription regulation. This Aspergillus terreus (strain NIH 2624 / FGSC A1156) protein is Nascent polypeptide-associated complex subunit alpha (egd2).